Consider the following 325-residue polypeptide: ATPase GET3 (325 aa).

Lysine 34 to threonine 41 provides a ligand contact to ATP. Residue aspartate 63 is part of the active site. Residues glutamate 243 and asparagine 270 each coordinate ATP. Residues cysteine 281 and cysteine 284 each coordinate Zn(2+).

Belongs to the arsA ATPase family. In terms of assembly, homodimer.

Its subcellular location is the cytoplasm. It localises to the endoplasmic reticulum. Its function is as follows. ATPase required for the post-translational delivery of tail-anchored (TA) proteins to the endoplasmic reticulum. Recognizes and selectively binds the transmembrane domain of TA proteins in the cytosol. This complex then targets to the endoplasmic reticulum by membrane-bound receptors, where the tail-anchored protein is released for insertion. This process is regulated by ATP binding and hydrolysis. ATP binding drives the homodimer towards the closed dimer state, facilitating recognition of newly synthesized TA membrane proteins. ATP hydrolysis is required for insertion. Subsequently, the homodimer reverts towards the open dimer state, lowering its affinity for the membrane-bound receptor, and returning it to the cytosol to initiate a new round of targeting. The sequence is that of ATPase GET3 from Coccidioides posadasii (strain C735) (Valley fever fungus).